We begin with the raw amino-acid sequence, 362 residues long: MKFGWIMANDEDWEERKETVKDSLESSIPAVMVYEEDIEKVKELGNIKTISKNPNSDIVVIDKGDDLTILFDAKKEGKETGVFISIECKEDEEYASEVSRYDYVDYIILEGKDWNIIPLENLIADLFDENIKIVSLAKDINDARTAYEILERGVDGVLYVPKDINDVKDFATLIEKMNSEKLDLDCATITKVEAIGSGDRVCIDTCSMMEMGEGMLIGSYSRALFLVHAETVENPYVATRPFRVNAGPVHAYVLCTGNKTRYLSELKAGDGILIVDKDGMTREGIVGRVKIEKRPLMLIEAEYVGGEIVRTIVQNAETIRLVNENGAPISVVDLKVGDKVKLKIDTNARHFGMAIQETIIEK.

This sequence belongs to the archaeal-type DHQ synthase family.

The catalysed reaction is 2-amino-2,3,7-trideoxy-D-lyxo-hept-6-ulosonate + NAD(+) + H2O = 3-dehydroquinate + NH4(+) + NADH + H(+). Catalyzes the oxidative deamination and cyclization of 2-amino-3,7-dideoxy-D-threo-hept-6-ulosonic acid (ADH) to yield 3-dehydroquinate (DHQ), which is fed into the canonical shikimic pathway of aromatic amino acid biosynthesis. The sequence is that of 3-dehydroquinate synthase from Methanococcus aeolicus (strain ATCC BAA-1280 / DSM 17508 / OCM 812 / Nankai-3).